Reading from the N-terminus, the 175-residue chain is Protein FMP23, mitochondrial (175 aa).

A mitochondrion-targeting transit peptide spans 1–38 (MLINHLSKIRTVRHFSNIKPVLSKEVSRRVIVAPASHF).

It is found in the mitochondrion. Its function is as follows. May be involved in mitochondrial iron or copper homeostatis. The chain is Protein FMP23, mitochondrial (FMP23) from Saccharomyces cerevisiae (strain ATCC 204508 / S288c) (Baker's yeast).